Reading from the N-terminus, the 334-residue chain is D-fructose 1,6-bisphosphatase class 2/sedoheptulose 1,7-bisphosphatase (334 aa).

The Mn(2+) site is built by Asp33, Glu57, Asp85, and Glu88. Substrate contacts are provided by residues 88–90, Tyr119, 164–166, and 186–188; these read EGT, RAR, and DGD. Mn(2+) is bound at residue Glu213.

The protein belongs to the FBPase class 2 family. As to quaternary structure, homotetramer. It depends on Mn(2+) as a cofactor.

The catalysed reaction is beta-D-fructose 1,6-bisphosphate + H2O = beta-D-fructose 6-phosphate + phosphate. The enzyme catalyses D-sedoheptulose 1,7-bisphosphate + H2O = D-sedoheptulose 7-phosphate + phosphate. It functions in the pathway carbohydrate biosynthesis; Calvin cycle. Catalyzes the hydrolysis of fructose 1,6-bisphosphate (Fru 1,6-P2) and sedoheptulose 1,7-bisphosphate (Sed 1,7-P2) to fructose 6-phosphate and sedoheptulose 7-phosphate, respectively. The chain is D-fructose 1,6-bisphosphatase class 2/sedoheptulose 1,7-bisphosphatase from Synechococcus sp. (strain CC9902).